The sequence spans 105 residues: Large ribosomal subunit protein uL24 (105 aa).

The protein belongs to the universal ribosomal protein uL24 family. Part of the 50S ribosomal subunit.

Its function is as follows. One of two assembly initiator proteins, it binds directly to the 5'-end of the 23S rRNA, where it nucleates assembly of the 50S subunit. Functionally, one of the proteins that surrounds the polypeptide exit tunnel on the outside of the subunit. The polypeptide is Large ribosomal subunit protein uL24 (Nitrosospira multiformis (strain ATCC 25196 / NCIMB 11849 / C 71)).